We begin with the raw amino-acid sequence, 219 residues long: Elongation factor Ts (219 aa).

The segment at 82 to 85 (TDFV) is involved in Mg(2+) ion dislocation from EF-Tu.

Belongs to the EF-Ts family.

Its subcellular location is the cytoplasm. Functionally, associates with the EF-Tu.GDP complex and induces the exchange of GDP to GTP. It remains bound to the aminoacyl-tRNA.EF-Tu.GTP complex up to the GTP hydrolysis stage on the ribosome. The sequence is that of Elongation factor Ts from Anaeromyxobacter dehalogenans (strain 2CP-1 / ATCC BAA-258).